A 139-amino-acid polypeptide reads, in one-letter code: Putative nickel-responsive regulator (139 aa).

Histidine 79, histidine 90, histidine 92, and cysteine 98 together coordinate Ni(2+).

This sequence belongs to the transcriptional regulatory CopG/NikR family. Ni(2+) is required as a cofactor.

Transcriptional regulator. In Geobacter sulfurreducens (strain ATCC 51573 / DSM 12127 / PCA), this protein is Putative nickel-responsive regulator.